Reading from the N-terminus, the 224-residue chain is Mannose-specific lectin 3 (224 aa).

Bulb-type lectin domains are found at residues asparagine 2–alanine 111 and arginine 117–threonine 222. 2 disulfides stabilise this stretch: cysteine 30–cysteine 52 and cysteine 145–cysteine 170.

In terms of assembly, heterotetramer of 2 domain 1 and 2 domain 2 chains arranged as a dimer of domain 1/domain 2 heterodimers.

In terms of biological role, mannose-specific lectin. Has weak agglutinating activity towards trypsin-treated erythrocytes from rabbit but not from human. In Crocus vernus (Dutch crocus), this protein is Mannose-specific lectin 3.